The chain runs to 185 residues: Potassium-transporting ATPase KdpC subunit (185 aa).

Residues 8–28 (LGLVLIMFVLCGFIFPLTVTA) traverse the membrane as a helical segment. Residues 113–132 (GQKLSSDAVTTSGSGLDPDI) form a disordered region. Over residues 114–126 (QKLSSDAVTTSGS) the composition is skewed to polar residues.

Belongs to the KdpC family. In terms of assembly, the system is composed of three essential subunits: KdpA, KdpB and KdpC.

The protein localises to the cell membrane. Part of the high-affinity ATP-driven potassium transport (or Kdp) system, which catalyzes the hydrolysis of ATP coupled with the electrogenic transport of potassium into the cytoplasm. This subunit acts as a catalytic chaperone that increases the ATP-binding affinity of the ATP-hydrolyzing subunit KdpB by the formation of a transient KdpB/KdpC/ATP ternary complex. The sequence is that of Potassium-transporting ATPase KdpC subunit from Staphylococcus haemolyticus (strain JCSC1435).